Reading from the N-terminus, the 427-residue chain is Delta(14)-sterol reductase (427 aa).

The Cytoplasmic segment spans residues 1–25 (MSEQESRDNAAVDAVRQKYGFGFSW). A helical membrane pass occupies residues 26-46 (LVLMIALPPLVYYLWICVTYY). At 47–70 (QGELVFTSDAAAWRRFWSHVAPPT) the chain is on the periplasmic side. A helical transmembrane segment spans residues 71–91 (WHAAGLYAAWFLGQAALQVWA). The Cytoplasmic portion of the chain corresponds to 92–110 (PGPTVQGMKLPDGSRLDYR). Residues 111–131 (MNGIFSFLFTLAVVFGLVTMG) traverse the membrane as a helical segment. The Periplasmic segment spans residues 132–141 (WLDATVLYDQ). The chain crosses the membrane as a helical span at residues 142 to 162 (LGPLLTVVNIFTFVFAGFLYF). The Cytoplasmic segment spans residues 163-197 (WGLNGKQWERPTGRPFYDYFMGTALNPRIGSLDLK). Residues 198 to 218 (LFCEARPGMIFWLLMNLSMAA) traverse the membrane as a helical segment. Over 219–226 (KQYELHGT) the chain is Periplasmic. A helical membrane pass occupies residues 227–247 (VTVPMLLVVGFQSFYLIDYFI). Residues 248 to 262 (HEEAVLTTWDIKHEK) lie on the Cytoplasmic side of the membrane. A helical membrane pass occupies residues 263-283 (FGWMLCWGDLVWLPFTYTLQA). Over 284–291 (QYLVHHTH) the chain is Periplasmic. Residues 292 to 312 (DLPVWGIIAIVALNLAGYAIF) traverse the membrane as a helical segment. The Cytoplasmic segment spans residues 313 to 356 (RGANIQKHHFRRDPNRIVWGKPAKYIKTKQGSLLLTSGWWGIAR). Residues Lys319, Arg323, Leu347, Trp352, and 359-360 (NY) each bind NADP(+). A helical transmembrane segment spans residues 357-377 (HMNYFGDLMIALSWCLPAAFG). Ser378 is a topological domain (periplasmic). A helical transmembrane segment spans residues 379–399 (PIPYFHIVYFTILLLHREKRD). Residues Asp399, 403-407 (CLAKY), and Tyr414 each bind NADP(+). Over 400 to 427 (DAMCLAKYGEDWLQYRKKVPWRIVPKIY) the chain is Cytoplasmic.

Belongs to the ERG4/ERG24 family.

Its subcellular location is the cell inner membrane. The catalysed reaction is 4,4-dimethyl-5alpha-cholesta-8,24-dien-3beta-ol + NADP(+) = 4,4-dimethyl-5alpha-cholesta-8,14,24-trien-3beta-ol + NADPH + H(+). The protein operates within steroid biosynthesis; zymosterol biosynthesis; zymosterol from lanosterol. In terms of biological role, reduces the C14=C15 double bond of 4,4-dimethyl-cholesta-8,14,24-trienol to produce 4,4-dimethyl-cholesta-8,24-dienol. Complements the deletion of the Delta(14)-sterol reductase gene ERG24 in yeast. The polypeptide is Delta(14)-sterol reductase (Methylotuvimicrobium alcaliphilum (strain DSM 19304 / NCIMB 14124 / VKM B-2133 / 20Z) (Methylomicrobium alcaliphilum)).